The following is a 483-amino-acid chain: Low-density lipoprotein receptor-related protein 11 (483 aa).

The N-terminal stretch at 1–32 is a signal peptide; the sequence is MATRGGGPGPGFRHRALRGLLLLCLWLPGSRP. The Extracellular portion of the chain corresponds to 33 to 433; sequence GEPAAPSSGV…GGEHPAPEAG (401 aa). Positions 85 to 172 constitute an MANSC domain; that stretch reads AVPDTIIRTQ…FAPLRGYRTY (88 aa). 2 N-linked (GlcNAc...) asparagine glycosylation sites follow: N152 and N275. Positions 193–287 constitute a PKD domain; it reads PVSKAGKDVV…VTVLPRPYST (95 aa). Positions 293-329 constitute an LDL-receptor class A domain; the sequence is ACSRYHFFCDSGCCIDIALACDGVRQCPDGSDEDFCQ. 3 disulfides stabilise this stretch: C294–C306, C301–C319, and C313–C328. The segment at 346-428 is disordered; that stretch reads AQPGAMGLNE…KSGQAGGEHP (83 aa). Polar residues-rich tracts occupy residues 367 to 376 and 385 to 407; these read RATTHNQPAT and HSTQKAPESQINPVQPDSNSSGK. N-linked (GlcNAc...) asparagine glycosylation is present at N403. Residues 408–418 show a composition bias toward basic and acidic residues; the sequence is NQEEGNYDLKS. Residues 434–456 form a helical membrane-spanning segment; that stretch reads AVLPLALGLAITVLLLLMVTCRL. Residues 457-483 are Cytoplasmic-facing; that stretch reads RLVKQKLKKARPITSEESDYLINGMYL. S474 bears the Phosphoserine mark.

The protein belongs to the LDLR family.

It is found in the membrane. The polypeptide is Low-density lipoprotein receptor-related protein 11 (Lrp11) (Mus musculus (Mouse)).